A 72-amino-acid chain; its full sequence is Prokaryotic ubiquitin-like protein Pup (72 aa).

The segment covering 1–10 (MATKDTGGGQ) has biased composition (gly residues). The disordered stretch occupies residues 1–45 (MATKDTGGGQQKATRNTEEVEEQAQDAQASEDLKERQEKLSDDVD). A coiled-coil region spans residues 9–60 (GQQKATRNTEEVEEQAQDAQASEDLKERQEKLSDDVDSVLDEIDDVLEENAE). Positions 28-66 (QASEDLKERQEKLSDDVDSVLDEIDDVLEENAEDFVRSF) are ARC ATPase binding. Over residues 31-42 (EDLKERQEKLSD) the composition is skewed to basic and acidic residues. An Isoglutamyl lysine isopeptide (Glu-Lys) (interchain with K-? in acceptor proteins) cross-link involves residue Glu72.

The protein belongs to the prokaryotic ubiquitin-like protein family. In terms of assembly, strongly interacts with the proteasome-associated ATPase ARC through a hydrophobic interface; the interacting region of Pup lies in its C-terminal half. There is one Pup binding site per ARC hexamer ring.

It functions in the pathway protein degradation; proteasomal Pup-dependent pathway. Functionally, protein modifier that is covalently attached to lysine residues of substrate proteins, thereby targeting them for proteasomal degradation. The tagging system is termed pupylation. This is Prokaryotic ubiquitin-like protein Pup from Streptomyces avermitilis (strain ATCC 31267 / DSM 46492 / JCM 5070 / NBRC 14893 / NCIMB 12804 / NRRL 8165 / MA-4680).